A 230-amino-acid polypeptide reads, in one-letter code: MVHPLLFLQFLSTKLQHLLHISDASANAVVYTWTVIVLLLVLSLIATRALKTIPSGVQNFMEVVVDGIENMIVETMGEHGRSFFPLIATLAIFILVSNLVGLIPGFYPPTANVNTTAACAIVVFLATHVVGIKHHGFHYLKHFMGPIWWLAPLMFFIEVIGHLSRPVSLTLRLFGNMNGHELVLMIFFALAPFLVPLPMMLMGVLVSFIQAFVFMLLAMIYIQGSLEEAH.

The next 6 helical transmembrane spans lie at 26–46 (ANAV…SLIA), 83–103 (FFPL…VGLI), 112–132 (NVNT…VVGI), 143–163 (FMGP…IGHL), 182–202 (LVLM…MMLM), and 203–223 (GVLV…IYIQ).

Belongs to the ATPase A chain family. As to quaternary structure, F-type ATPases have 2 components, CF(1) - the catalytic core - and CF(0) - the membrane proton channel. CF(1) has five subunits: alpha(3), beta(3), gamma(1), delta(1), epsilon(1). CF(0) has three main subunits: a(1), b(2) and c(9-12). The alpha and beta chains form an alternating ring which encloses part of the gamma chain. CF(1) is attached to CF(0) by a central stalk formed by the gamma and epsilon chains, while a peripheral stalk is formed by the delta and b chains.

The protein resides in the cell inner membrane. Its function is as follows. Key component of the proton channel; it plays a direct role in the translocation of protons across the membrane. The sequence is that of ATP synthase subunit a from Trichlorobacter lovleyi (strain ATCC BAA-1151 / DSM 17278 / SZ) (Geobacter lovleyi).